The chain runs to 561 residues: Putative transport protein YbjL (561 aa).

5 consecutive transmembrane segments (helical) span residues 8-28 (LLNG…LCLG), 32-52 (LGSV…LLGQ), 66-86 (FMLF…SIFF), 94-114 (MLAL…GKLF), and 158-178 (NLSL…IVGA). RCK C-terminal domains are found at residues 200-288 (RGLD…SFRN) and 292-373 (VFDR…RIGF). The next 5 membrane-spanning stretches (helical) occupy residues 383-403 (LLAF…TFQF), 406-426 (FSFG…LGFL), 447-467 (FGLM…INNG), 475-495 (MLIA…LFGA), and 537-557 (GTYA…VIIW).

The protein belongs to the AAE transporter (TC 2.A.81) family. YbjL subfamily.

The protein localises to the cell membrane. The protein is Putative transport protein YbjL of Salmonella choleraesuis (strain SC-B67).